Consider the following 432-residue polypeptide: Adenylosuccinate synthetase (432 aa).

Residues 13-19 and 41-43 contribute to the GTP site; these read GDEGKGK and GHT. Aspartate 14 functions as the Proton acceptor in the catalytic mechanism. 2 residues coordinate Mg(2+): aspartate 14 and glycine 41. IMP contacts are provided by residues 14–17, 39–42, threonine 130, arginine 144, glutamine 225, threonine 240, and arginine 304; these read DEGK and NAGH. Histidine 42 serves as the catalytic Proton donor. 300-306 serves as a coordination point for substrate; the sequence is ATTGRSR. GTP-binding positions include arginine 306, 332–334, and 415–417; these read KLD and STG.

It belongs to the adenylosuccinate synthetase family. Homodimer. Mg(2+) serves as cofactor.

It localises to the cytoplasm. The enzyme catalyses IMP + L-aspartate + GTP = N(6)-(1,2-dicarboxyethyl)-AMP + GDP + phosphate + 2 H(+). It participates in purine metabolism; AMP biosynthesis via de novo pathway; AMP from IMP: step 1/2. Plays an important role in the de novo pathway of purine nucleotide biosynthesis. Catalyzes the first committed step in the biosynthesis of AMP from IMP. The protein is Adenylosuccinate synthetase of Yersinia enterocolitica serotype O:8 / biotype 1B (strain NCTC 13174 / 8081).